The primary structure comprises 177 residues: ATP-dependent protease subunit HslV (177 aa).

T6 is a catalytic residue. 3 residues coordinate Na(+): S162, C165, and T168.

This sequence belongs to the peptidase T1B family. HslV subfamily. A double ring-shaped homohexamer of HslV is capped on each side by a ring-shaped HslU homohexamer. The assembly of the HslU/HslV complex is dependent on binding of ATP.

The protein localises to the cytoplasm. It carries out the reaction ATP-dependent cleavage of peptide bonds with broad specificity.. With respect to regulation, allosterically activated by HslU binding. In terms of biological role, protease subunit of a proteasome-like degradation complex believed to be a general protein degrading machinery. This chain is ATP-dependent protease subunit HslV, found in Desulforudis audaxviator (strain MP104C).